The sequence spans 313 residues: Putative S-adenosyl-L-methionine-dependent methyltransferase MAV_5150 (313 aa).

Residues Asp139 and 168–169 (DL) each bind S-adenosyl-L-methionine.

Belongs to the UPF0677 family.

Exhibits S-adenosyl-L-methionine-dependent methyltransferase activity. This is Putative S-adenosyl-L-methionine-dependent methyltransferase MAV_5150 from Mycobacterium avium (strain 104).